We begin with the raw amino-acid sequence, 398 residues long: Protein ELC (398 aa).

The UEV domain occupies 18–162 (ALSQRGPSSV…ARDPPLYSRR (145 aa)). Positions 157–202 (PLYSRRRPQPPPPSPPTVYDSSLSRPPSADQSLPRPFPPSPYGGGV) are disordered. Residues 175–187 (YDSSLSRPPSADQ) show a composition bias toward polar residues. Positions 247-291 (EAEAEELLSLQAGLKRREDELNIGLKEMVEEKETLEQQLQIISMN) form a coiled coil. One can recognise an SB domain in the interval 322 to 390 (DTLSKQMLEC…RAAQMEVQVA (69 aa)).

This sequence belongs to the ubiquitin-conjugating enzyme family. UEV subfamily. In terms of assembly, component of the endosomal sorting required for transport complex I (ESCRT-I), composed of ELC, VPS28 and VPS37. Interacts with VPS28 and VPS37. Binds ubiquitin in vitro. Interacts with FREE1. Interacts with TOL9/TOM1D. Interacts with BRO1/ALIX. Interacts with SINAT1, SINAT2, SINAT3 and SINAT4. Post-translationally, ubiquitinated by SINAT1, SINAT2, SINAT3 and SINAT4 for subsequent proteasomal degradation. Expressed in roots, stems, leaves and flowers.

Its subcellular location is the early endosome. It is found in the late endosome. It localises to the prevacuolar compartment. Its function is as follows. Component of the ESCRT-I complex (endosomal sorting complex required for transport I), a regulator of vesicular trafficking process. Required for the sorting of endocytic ubiquitinated cargos into multivesicular bodies (MVBs). May control nuclear division through the microtubule cytoskeleton. The chain is Protein ELC from Arabidopsis thaliana (Mouse-ear cress).